A 210-amino-acid polypeptide reads, in one-letter code: Probable GTP-binding protein EngB (210 aa).

The EngB-type G domain maps to 24 to 199 (QGCEVAFAGR…WEVLGRWLDL (176 aa)). GTP is bound by residues 32–39 (GRSNAGKS), 59–63 (GRTRM), 77–80 (DLPG), 144–147 (TKSD), and 178–180 (FSS). Positions 39 and 61 each coordinate Mg(2+).

The protein belongs to the TRAFAC class TrmE-Era-EngA-EngB-Septin-like GTPase superfamily. EngB GTPase family. Requires Mg(2+) as cofactor.

In terms of biological role, necessary for normal cell division and for the maintenance of normal septation. The protein is Probable GTP-binding protein EngB of Methylococcus capsulatus (strain ATCC 33009 / NCIMB 11132 / Bath).